A 321-amino-acid chain; its full sequence is Histidine N-alpha-methyltransferase (321 aa).

L-histidine is bound at residue Y56. Residues G86, K92, D113, and 141-142 (DF) each bind S-adenosyl-L-methionine. Residues N166, Y206, and 282-284 (EVS) each bind L-histidine.

The protein belongs to the methyltransferase superfamily. EgtD family. As to quaternary structure, monomer.

It catalyses the reaction L-histidine + 3 S-adenosyl-L-methionine = hercynine + 3 S-adenosyl-L-homocysteine + 3 H(+). It participates in amino-acid biosynthesis; ergothioneine biosynthesis. Its function is as follows. Catalyzes the SAM-dependent triple methylation of the alpha-amino group of histidine to form hercynine, a step in the biosynthesis pathway of ergothioneine (ERG). ERG is one of the major redox buffers which protects bacteria against redox stressors and antibiotics; loss of ERG or mycothiol (MSH, the other major redox buffer in this bacteria) leads to respiratory alterations and bioenergetic deficiencies that negatively impact virulence. This Mycobacterium tuberculosis (strain CDC 1551 / Oshkosh) protein is Histidine N-alpha-methyltransferase (egtD).